The following is a 530-amino-acid chain: PC4 and SFRS1-interacting protein (530 aa).

The PWWP domain maps to 1–64; the sequence is MTRDFKPGDL…PKDIFPYSEN (64 aa). Lysine 75 is covalently cross-linked (Glycyl lysine isopeptide (Lys-Gly) (interchain with G-Cter in SUMO2)). Positions 86–349 are disordered; sequence NNPKVKFSSQ…VEKKRETSMD (264 aa). Residues 92-104 are compositionally biased toward polar residues; sequence FSSQQASTKQSNA. Serine 102, serine 105, and serine 106 each carry phosphoserine. A compositionally biased stretch (basic and acidic residues) spans 113-135; the sequence is KETSVSKEDTDHEEKASNEDVTK. Residues threonine 115 and threonine 122 each carry the phosphothreonine modification. Position 129 is a phosphoserine (serine 129). Threonine 141 carries the post-translational modification Phosphothreonine. A compositionally biased stretch (basic residues) spans 144-153; that stretch reads AARRGRKRKA. A Nuclear localization signal motif is present at residues 146–156; that stretch reads RRGRKRKAEKQ. At threonine 167 the chain carries Phosphothreonine. Phosphoserine occurs at positions 177 and 206. Residues 213-261 are compositionally biased toward basic and acidic residues; sequence EEDKSKKKGQEEKQPKKQLKKDEEGQKEEDKPRKEPDKKEGKKEVESKR. Phosphoserine is present on serine 271. A Phosphothreonine modification is found at threonine 272. 2 positions are modified to phosphoserine: serine 273 and serine 275. Residues 274–283 show a composition bias toward acidic residues; sequence DSEEEGDDQE. The span at 287–302 shows a compositional bias: basic residues; that stretch reads KRKGGRNFQTAHRRNM. A compositionally biased stretch (basic and acidic residues) spans 305-349; that stretch reads GQHEKEAADRKRKQEEQMETEQQNKDEGKKPEVKKVEKKRETSMD. 2 coiled-coil regions span residues 306 to 334 and 371 to 395; these read QHEK…EGKK and NRCI…KHTE. An integrase-binding domain (IBD) region spans residues 340–417; sequence VEKKRETSMD…VSQIIMEKST (78 aa). Serine 434 is subject to Phosphoserine. Phosphothreonine is present on threonine 437. Serine 443 is subject to Phosphoserine. Positions 446–473 are enriched in basic and acidic residues; that stretch reads EQRQHEEANKTKDQGKKGPNKKLDKEQT. The disordered stretch occupies residues 446–530; that stretch reads EQRQHEEANK…ISLKDSTLDN (85 aa). Polar residues predominate over residues 474–494; sequence GSKTLNGGSDAPDSNQAQHNG. The segment covering 498–530 has biased composition (basic and acidic residues); it reads EESKDKHEASSKKKPSNEERETEISLKDSTLDN. A Citrulline modification is found at arginine 517. Phosphoserine is present on serine 522. The residue at position 527 (threonine 527) is a Phosphothreonine.

This sequence belongs to the HDGF family. In terms of assembly, monomer. Interacts with IFRD1/PC4. Interacts (via IBD domain) with POGZ (via IBM motif) and CDCA7L (via IBM motifs). Interacts (via IBD domain) with KMT2A (via IBM motifs) with a moderate affinity whereas interacts with the KMT2A-MEN1 complex with a greater affinity; MEN1 enhances interaction of KMT2A with PSIP1. Interacts (via IBD domain) with IWS1 (via IBM motif), MED1 (via IBM motif) and DBF4 (via IBM motifs). As to quaternary structure, (Microbial infection) Interacts (via IBD domain) with feline immunodeficiency virus (FIV) integrase (IN), determining its nuclear localization, its tight association with chromatin and its protection from the proteasome. In terms of processing, citrullinated by PADI4.

Its subcellular location is the nucleus. Transcriptional coactivator involved in neuroepithelial stem cell differentiation and neurogenesis. Involved in particular in lens epithelial cell gene regulation and stress responses. May play an important role in lens epithelial to fiber cell terminal differentiation. May play a protective role during stress-induced apoptosis. This Felis catus (Cat) protein is PC4 and SFRS1-interacting protein (PSIP1).